Reading from the N-terminus, the 215-residue chain is Cytochrome b6 (215 aa).

A helical transmembrane segment spans residues 32 to 52 (IFYCLGGITLTCFLIQFATGF). Position 35 (Cys-35) interacts with heme c. Heme b-binding residues include His-86 and His-100. 3 helical membrane passes run 90–110 (ASMM…TGGF), 116–136 (LTWV…VTGY), and 186–206 (AHTF…FLMI). Residues His-187 and His-202 each coordinate heme b.

It belongs to the cytochrome b family. PetB subfamily. In terms of assembly, the 4 large subunits of the cytochrome b6-f complex are cytochrome b6, subunit IV (17 kDa polypeptide, PetD), cytochrome f and the Rieske protein, while the 4 small subunits are PetG, PetL, PetM and PetN. The complex functions as a dimer. Heme b serves as cofactor. Heme c is required as a cofactor.

Its subcellular location is the cellular thylakoid membrane. Component of the cytochrome b6-f complex, which mediates electron transfer between photosystem II (PSII) and photosystem I (PSI), cyclic electron flow around PSI, and state transitions. The chain is Cytochrome b6 from Desmonostoc sp. (strain PCC 7906) (Nostoc sp. (strain PCC 7906)).